The primary structure comprises 211 residues: Uracil phosphoribosyltransferase (211 aa).

Residues Arg-81, Arg-106, and 133-141 (DPMLATGNS) each bind 5-phospho-alpha-D-ribose 1-diphosphate. Uracil contacts are provided by residues Ile-196 and 201–203 (GDA). Position 202 (Asp-202) interacts with 5-phospho-alpha-D-ribose 1-diphosphate.

This sequence belongs to the UPRTase family. The cofactor is Mg(2+).

It carries out the reaction UMP + diphosphate = 5-phospho-alpha-D-ribose 1-diphosphate + uracil. It functions in the pathway pyrimidine metabolism; UMP biosynthesis via salvage pathway; UMP from uracil: step 1/1. Allosterically activated by GTP. Catalyzes the conversion of uracil and 5-phospho-alpha-D-ribose 1-diphosphate (PRPP) to UMP and diphosphate. This is Uracil phosphoribosyltransferase from Paracoccus denitrificans (strain Pd 1222).